A 255-amino-acid polypeptide reads, in one-letter code: MTTSSPWRATVLTLFPEMFPGPLGVSLAGRALASGLWQLEARDIRASATDRHRSVDDTPAGGGPGMVLRADVLAAAIDAAEIGQGSSKERPRLLMSPRGRPLTQARVVELARGPGPLIVCGRFEGIDQRVIDGRGLEEVSIGDYVLSGGEIAALALIDACVRLLPGVMGKEASGTEESFSDGLLEYPQYTRPQLFEGVPIPEILTSGDHAKVAAWRRAEAEALTAARRPDLWAQIPVKAPNRAGRQKTPKNKTDG.

Residues Gly121 and 141-146 (IGDYVL) each bind S-adenosyl-L-methionine. Residues 236 to 255 (PVKAPNRAGRQKTPKNKTDG) are disordered. The span at 244-255 (GRQKTPKNKTDG) shows a compositional bias: basic residues.

Belongs to the RNA methyltransferase TrmD family. As to quaternary structure, homodimer.

It localises to the cytoplasm. The catalysed reaction is guanosine(37) in tRNA + S-adenosyl-L-methionine = N(1)-methylguanosine(37) in tRNA + S-adenosyl-L-homocysteine + H(+). Specifically methylates guanosine-37 in various tRNAs. The protein is tRNA (guanine-N(1)-)-methyltransferase of Bradyrhizobium diazoefficiens (strain JCM 10833 / BCRC 13528 / IAM 13628 / NBRC 14792 / USDA 110).